The sequence spans 446 residues: Tubulin beta-2 chain (446 aa).

GTP-binding residues include Gln11, Glu69, Ser138, Gly142, Thr143, Gly144, Asn204, and Asn226. Glu69 contacts Mg(2+). Positions Gln424–Glu446 are disordered. A compositionally biased stretch (acidic residues) spans Thr429–Glu446.

This sequence belongs to the tubulin family. Dimer of alpha and beta chains. A typical microtubule is a hollow water-filled tube with an outer diameter of 25 nm and an inner diameter of 15 nM. Alpha-beta heterodimers associate head-to-tail to form protofilaments running lengthwise along the microtubule wall with the beta-tubulin subunit facing the microtubule plus end conferring a structural polarity. Microtubules usually have 13 protofilaments but different protofilament numbers can be found in some organisms and specialized cells. It depends on Mg(2+) as a cofactor. Testis specific.

It localises to the cytoplasm. The protein resides in the cytoskeleton. Tubulin is the major constituent of microtubules, a cylinder consisting of laterally associated linear protofilaments composed of alpha- and beta-tubulin heterodimers. Microtubules grow by the addition of GTP-tubulin dimers to the microtubule end, where a stabilizing cap forms. Below the cap, tubulin dimers are in GDP-bound state, owing to GTPase activity of alpha-tubulin. This is Tubulin beta-2 chain (betaTub85D) from Drosophila melanogaster (Fruit fly).